We begin with the raw amino-acid sequence, 453 residues long: MSPQTETKAGVGFKAGVKEYKLTYYTPEYETKDTDILAAFRVTPQPGVPPEERGAAVAAESSTGTWTTVWTDGLTSLDRYKGRCYHIEPVPGEEEQFIAYVAYPLDLFEEGSVTNMFTSIVGNVFGFKALRALRLEDLRIPVAYVKTFQGPPHGIQVERDKLNKYGRPLLGCTIKPKLGLSAKNYGRAVYECLRGGLDFTKDDENVNSQPFMRWRDRFLFCAEAIYKSQAETGEIKGHYLNATAGTCEEMIKRAVFARELGVPIVMHDYLTGGFTANTSLSHYCRDNGLLLHIHRAMHAVIDRQKNHGMHFRVLAKALRMSGGDHVHSGTVVGKLEGERDITLGFVDLLRDDYIEKDRSRGVYFTQDWVSLPGVLPVASRGIHVWHMPALTEIFGDDSVLQFGGGTLGHPWGNAPGAVANRVALEACVKARNEGRDLAAEGGEIIREACKWSP.

Residues 1 to 2 (MS) constitute a propeptide that is removed on maturation. Position 3 is an N-acetylproline (P3). K14 is subject to N6,N6,N6-trimethyllysine. Residues N123 and T173 each contribute to the substrate site. The Proton acceptor role is filled by K175. K177 is a binding site for substrate. Residues K201, D203, and E204 each contribute to the Mg(2+) site. K201 carries the N6-carboxylysine modification. H294 serves as the catalytic Proton acceptor. Positions 295, 327, and 379 each coordinate substrate.

It belongs to the RuBisCO large chain family. Type I subfamily. In terms of assembly, heterohexadecamer of 8 large chains and 8 small chains; disulfide-linked. The disulfide link is formed within the large subunit homodimers. Requires Mg(2+) as cofactor. The disulfide bond which can form in the large chain dimeric partners within the hexadecamer appears to be associated with oxidative stress and protein turnover.

It is found in the plastid. The protein localises to the chloroplast. The enzyme catalyses 2 (2R)-3-phosphoglycerate + 2 H(+) = D-ribulose 1,5-bisphosphate + CO2 + H2O. The catalysed reaction is D-ribulose 1,5-bisphosphate + O2 = 2-phosphoglycolate + (2R)-3-phosphoglycerate + 2 H(+). Functionally, ruBisCO catalyzes two reactions: the carboxylation of D-ribulose 1,5-bisphosphate, the primary event in carbon dioxide fixation, as well as the oxidative fragmentation of the pentose substrate in the photorespiration process. Both reactions occur simultaneously and in competition at the same active site. The chain is Ribulose bisphosphate carboxylase large chain from Galium lucidum.